The primary structure comprises 350 residues: Ion-translocating oxidoreductase complex subunit D (350 aa).

4 helical membrane-spanning segments follow: residues 36-56, 68-88, 89-109, and 120-140; these read FYFF…IALL, PIIS…IGVS, IPSI…IVIV, and IFNP…VQMT. Thr185 carries the FMN phosphoryl threonine modification. 5 helical membrane-spanning segments follow: residues 212–232, 239–259, 265–285, 291–311, and 315–335; these read GFGV…LAML, WQIS…GYLL, IGPL…FIAT, ATSV…VYVI, and GGYP…APFI.

It belongs to the NqrB/RnfD family. As to quaternary structure, the complex is composed of six subunits: RnfA, RnfB, RnfC, RnfD, RnfE and RnfG. FMN is required as a cofactor.

The protein resides in the cell inner membrane. Its function is as follows. Part of a membrane-bound complex that couples electron transfer with translocation of ions across the membrane. The protein is Ion-translocating oxidoreductase complex subunit D of Shewanella piezotolerans (strain WP3 / JCM 13877).